The sequence spans 318 residues: MTQFEIECLDSKVYNARDHWSRFVIDPLKPGQGTTLGNALRRTLLSELEGLAITAVRIAGVSHEFSTINGIREDVLEILLNLKEIVFSGQLQESTIGRLTVQGPAIVTARSFELPPEIKLIDPEQYIATICGNNTLEMEFKIEVGSGYKIVEKDNSTEHFEFLQVDSVFMPVKKVNFRIEETRGENNILNEQLILDIWTNGSISAKEAISNAADNLINLFSPLKTIDGESETDYETNETSHINQILIEELQLSVRAYNCLKRGCAHIHSVADLLDYSQEDLIEIKNFGQKSAEEVIDALQKRLGINLPKEKTTKIYNK.

The interval 1-227 (MTQFEIECLD…NLFSPLKTID (227 aa)) is alpha N-terminal domain (alpha-NTD). The alpha C-terminal domain (alpha-CTD) stretch occupies residues 241–318 (HINQILIEEL…KEKTTKIYNK (78 aa)).

This sequence belongs to the RNA polymerase alpha chain family. In plastids the minimal PEP RNA polymerase catalytic core is composed of four subunits: alpha, beta, beta', and beta''. When a (nuclear-encoded) sigma factor is associated with the core the holoenzyme is formed, which can initiate transcription.

The protein resides in the plastid. The protein localises to the chloroplast. The catalysed reaction is RNA(n) + a ribonucleoside 5'-triphosphate = RNA(n+1) + diphosphate. Its function is as follows. DNA-dependent RNA polymerase catalyzes the transcription of DNA into RNA using the four ribonucleoside triphosphates as substrates. This is DNA-directed RNA polymerase subunit alpha from Guillardia theta (Cryptophyte).